The sequence spans 535 residues: Estrogen receptor (535 aa).

The tract at residues 1 to 21 is disordered; that stretch reads SRMLTDPPRIGSMQSLGSSPT. Residues 1–104 are modulating; sequence SRMLTDPPRI…VFEMANETRY (104 aa). The span at 12-21 shows a compositional bias: polar residues; sequence SMQSLGSSPT. 2 NR C4-type zinc fingers span residues 105 to 125 and 141 to 165; these read CAVC…CEGC and CPAT…LRKC. Positions 105–170 form a DNA-binding region, nuclear receptor; it reads CAVCSDFASG…RLRKCYEVGM (66 aa). The hinge stretch occupies residues 171-236; the sequence is VKGGLRKDRG…GGWCGPRITM (66 aa). The tract at residues 187–229 is disordered; the sequence is DKRYCGPAGDREKPYGDLEHRTAPPQDGGRNSSSSSLSGGGGW. Residues 195 to 208 are compositionally biased toward basic and acidic residues; sequence GDREKPYGDLEHRT. The segment covering 214–223 has biased composition (low complexity); it reads GGRNSSSSSL. The region spanning 237–473 is the NR LBD domain; it reads PPEQVLFLLQ…DLLLEMLDGH (237 aa). The interval 478–535 is disordered; that stretch reads PGKVAQAGEQTEGPSTTTTTSTGSSIGPMRGSQDTHIRSPGSGVLQYGSPSSDQMPIP. A compositionally biased stretch (low complexity) spans 492-502; the sequence is STTTTTSTGSS. The span at 525-535 shows a compositional bias: polar residues; it reads GSPSSDQMPIP.

It belongs to the nuclear hormone receptor family. NR3 subfamily. As to quaternary structure, binds DNA as a homodimer. Can form a heterodimer with ER-beta. In terms of tissue distribution, highest expression in brain and liver.

The protein localises to the nucleus. The steroid hormones and their receptors are involved in the regulation of eukaryotic gene expression and affect cellular proliferation and differentiation in target tissues. The polypeptide is Estrogen receptor (esr1) (Salmo salar (Atlantic salmon)).